We begin with the raw amino-acid sequence, 432 residues long: Adenosylhomocysteinase (432 aa).

Substrate is bound by residues Thr-57, Asp-131, and Glu-156. 157–159 (TTT) lines the NAD(+) pocket. A Phosphoserine modification is found at Ser-183. Residues Lys-186 and Asp-190 each coordinate substrate. At Lys-186 the chain carries N6-(2-hydroxyisobutyryl)lysine. Phosphotyrosine is present on Tyr-193. NAD(+)-binding positions include 222–227 (GDVGKG), Glu-243, Asn-248, 299–301 (IGH), Asn-346, His-353, Lys-426, 426–430 (KPDHY), and Tyr-430.

This sequence belongs to the adenosylhomocysteinase family. Homotetramer. Interaction with AHCYL1. The cofactor is NAD(+).

Its subcellular location is the cytoplasm. The protein resides in the melanosome. It localises to the nucleus. It is found in the endoplasmic reticulum. It carries out the reaction S-adenosyl-L-homocysteine + H2O = L-homocysteine + adenosine. It functions in the pathway amino-acid biosynthesis; L-homocysteine biosynthesis; L-homocysteine from S-adenosyl-L-homocysteine: step 1/1. Functionally, catalyzes the hydrolysis of S-adenosyl-L-homocysteine to form adenosine and homocysteine. Binds copper ions. This Rattus norvegicus (Rat) protein is Adenosylhomocysteinase (Ahcy).